A 601-amino-acid chain; its full sequence is Transcription factor Ken (601 aa).

Positions 33–101 (ADLTIVCENK…LYSGQTCITS (69 aa)) constitute a BTB domain. Disordered stretches follow at residues 188–276 (AAEC…TINP), 331–365 (LSDG…DNQP), and 471–491 (DHPE…AGSN). Basic and acidic residues-rich tracts occupy residues 190–200 (ECERSGGHNNK) and 207–216 (CTHKDNKSDK). Positions 223-234 (NLSNAPPSGTSG) are enriched in polar residues. Residues 235–247 (SNSNISTSSNHQQ) are compositionally biased toward low complexity. The segment covering 248–258 (QQHHHHHHHNH) has biased composition (basic residues). Over residues 259 to 275 (NNNNNNNNNNSSSSTIN) the composition is skewed to low complexity. Residues 476 to 490 (RSGSASGSGANLAGS) show a composition bias toward low complexity. 3 C2H2-type zinc fingers span residues 500–522 (YRCE…LRVH), 528–551 (FACR…CSVH), and 567–590 (YSCC…SGHH).

As to expression, expressed from stage 5 in two rather faint stripes at positions of 64% (anterior domain; AD) and 17% (posterior domain; PD) egg length. During early gastrulation, at stage 6, these two stripes become more evident and detectable at the region posterior to the cephalic furrow and in the hindgut primordium. The AD disappears as gastrulation proceeds, while the PD remains. At stage 15, the AD appears again in the foregut, and PD expression in the hindgut and anal pad. In imaginal disks, it is ubiquitously expressed in both males and females in genital and eye-antennal disks. Not expressed in the brain. In genital disks, it is expressed along the margin of the anterior bulbus in males, while in females it is expressed in the posterior compartment along the anterior-posterior border, with medial expansion in the most posterior region.

It is found in the nucleus. Transcription factor required for terminalia development. Negative regulator of the JAK/STAT pathway: represses JAK/STAT-dependent expression of ventral veins lacking (vvl) in the posterior spiracles. This chain is Transcription factor Ken (ken), found in Drosophila melanogaster (Fruit fly).